The sequence spans 249 residues: Tabinhibitin 4 (249 aa).

Positions 1 to 23 are cleaved as a signal peptide; sequence MTLNVYFVLLSPYSLQSVPLPLT. Residues 31–33 carry the Cell attachment site motif; the sequence is RGD. The 144-residue stretch at 64–207 folds into the SCP domain; it reads LQKTNWLRGV…LKRALFTCNF (144 aa). The short motif at 220–222 is the Cell attachment site element; the sequence is RGD.

Belongs to the CRISP family. Expressed in salivary glands.

The protein resides in the secreted. Functionally, inhibits platelet aggregation induced by all agonists tested (ADP, arachidonic acid, the thromboxane A2 analog U46619, thrombin, and snake venom snaclecs (TMVA that activates platelet through GPIB, and stejnulxin that specifically acts through GPVI (GP6))). May act by competing with fibrinogen for binding to glycoprotein IIb/IIIa (ITGA2B/ITGB3). In Tabanus yao (Horsefly), this protein is Tabinhibitin 4.